Reading from the N-terminus, the 536-residue chain is Membrane protein insertase YidC (536 aa).

5 consecutive transmembrane segments (helical) span residues 3–23 (LQRN…WKTW), 346–366 (ICGN…GITF), 417–437 (GGCF…YMLI), 454–474 (LSDQ…MFFI), and 494–514 (IPIL…LYYL).

The protein belongs to the OXA1/ALB3/YidC family. Type 1 subfamily. As to quaternary structure, interacts with the Sec translocase complex via SecD. Specifically interacts with transmembrane segments of nascent integral membrane proteins during membrane integration.

The protein localises to the cell membrane. Required for the insertion and/or proper folding and/or complex formation of integral membrane proteins into the membrane. Involved in integration of membrane proteins that insert both dependently and independently of the Sec translocase complex, as well as at least some lipoproteins. Aids folding of multispanning membrane proteins. The sequence is that of Membrane protein insertase YidC from Buchnera aphidicola subsp. Baizongia pistaciae (strain Bp).